A 440-amino-acid polypeptide reads, in one-letter code: Trigger factor (440 aa).

The 86-residue stretch at 163–248 folds into the PPIase FKBP-type domain; it reads NDTVSINFKG…INSIKEKVLP (86 aa).

Belongs to the FKBP-type PPIase family. Tig subfamily.

It is found in the cytoplasm. It carries out the reaction [protein]-peptidylproline (omega=180) = [protein]-peptidylproline (omega=0). Involved in protein export. Acts as a chaperone by maintaining the newly synthesized protein in an open conformation. Functions as a peptidyl-prolyl cis-trans isomerase. The sequence is that of Trigger factor from Finegoldia magna (strain ATCC 29328 / DSM 20472 / WAL 2508) (Peptostreptococcus magnus).